Here is a 174-residue protein sequence, read N- to C-terminus: RNA pyrophosphohydrolase (174 aa).

In terms of domain architecture, Nudix hydrolase spans 6 to 149 (GYRPNVGIIL…KRDVYLGALK (144 aa)). The Nudix box motif lies at 38–59 (GGIKPGESPETAMYRELYEEVG).

Belongs to the Nudix hydrolase family. RppH subfamily. The cofactor is a divalent metal cation.

Functionally, accelerates the degradation of transcripts by removing pyrophosphate from the 5'-end of triphosphorylated RNA, leading to a more labile monophosphorylated state that can stimulate subsequent ribonuclease cleavage. The protein is RNA pyrophosphohydrolase of Neisseria meningitidis serogroup A / serotype 4A (strain DSM 15465 / Z2491).